The following is a 344-amino-acid chain: Dihydroorotate dehydrogenase (quinone) (344 aa).

FMN-binding positions include 64–68 (AGLDK) and Thr-88. Lys-68 contributes to the substrate binding site. 113-117 (NRMGF) lines the substrate pocket. FMN-binding residues include Asn-144 and Asn-177. Position 177 (Asn-177) interacts with substrate. The active-site Nucleophile is the Ser-180. Position 182 (Asn-182) interacts with substrate. FMN contacts are provided by Lys-222 and Thr-250. 251-252 (NT) is a binding site for substrate. FMN is bound by residues Gly-273, Gly-302, and 323-324 (YS).

The protein belongs to the dihydroorotate dehydrogenase family. Type 2 subfamily. Monomer. It depends on FMN as a cofactor.

It localises to the cell membrane. It catalyses the reaction (S)-dihydroorotate + a quinone = orotate + a quinol. The protein operates within pyrimidine metabolism; UMP biosynthesis via de novo pathway; orotate from (S)-dihydroorotate (quinone route): step 1/1. Its function is as follows. Catalyzes the conversion of dihydroorotate to orotate with quinone as electron acceptor. The chain is Dihydroorotate dehydrogenase (quinone) from Polynucleobacter necessarius subsp. necessarius (strain STIR1).